We begin with the raw amino-acid sequence, 416 residues long: Gamma-glutamyl phosphate reductase (416 aa).

Belongs to the gamma-glutamyl phosphate reductase family.

The protein localises to the cytoplasm. It catalyses the reaction L-glutamate 5-semialdehyde + phosphate + NADP(+) = L-glutamyl 5-phosphate + NADPH + H(+). The protein operates within amino-acid biosynthesis; L-proline biosynthesis; L-glutamate 5-semialdehyde from L-glutamate: step 2/2. Its function is as follows. Catalyzes the NADPH-dependent reduction of L-glutamate 5-phosphate into L-glutamate 5-semialdehyde and phosphate. The product spontaneously undergoes cyclization to form 1-pyrroline-5-carboxylate. This Salmonella schwarzengrund (strain CVM19633) protein is Gamma-glutamyl phosphate reductase.